The sequence spans 209 residues: Large ribosomal subunit protein uL3 (209 aa).

The interval 130–154 (RGPMSHGSKFHRAVGSMGASSDPSR) is disordered.

This sequence belongs to the universal ribosomal protein uL3 family. As to quaternary structure, part of the 50S ribosomal subunit. Forms a cluster with proteins L14 and L19.

Its function is as follows. One of the primary rRNA binding proteins, it binds directly near the 3'-end of the 23S rRNA, where it nucleates assembly of the 50S subunit. The protein is Large ribosomal subunit protein uL3 of Clostridium kluyveri (strain NBRC 12016).